The following is a 61-amino-acid chain: Bacteriocin leucocin-B (61 aa).

Residues 1–24 (MNNMKSADNYQQLDNNALEQVVGG) constitute a propeptide that is removed on maturation. C33 and C38 are joined by a disulfide.

The protein belongs to the bacteriocin class IIA/YGNGV family.

It localises to the secreted. Functionally, active against L.monocytogenes and several lactic acid bacteria. This Leuconostoc carnosum protein is Bacteriocin leucocin-B.